A 706-amino-acid chain; its full sequence is Elongation factor G (706 aa).

The tr-type G domain maps to 8-290 (NRYRNIGICA…AVIDYLPAPT (283 aa)). GTP-binding positions include 17 to 24 (AHVDAGKT), 88 to 92 (DTPGH), and 142 to 145 (NKMD).

Belongs to the TRAFAC class translation factor GTPase superfamily. Classic translation factor GTPase family. EF-G/EF-2 subfamily.

It localises to the cytoplasm. In terms of biological role, catalyzes the GTP-dependent ribosomal translocation step during translation elongation. During this step, the ribosome changes from the pre-translocational (PRE) to the post-translocational (POST) state as the newly formed A-site-bound peptidyl-tRNA and P-site-bound deacylated tRNA move to the P and E sites, respectively. Catalyzes the coordinated movement of the two tRNA molecules, the mRNA and conformational changes in the ribosome. The protein is Elongation factor G of Stutzerimonas stutzeri (strain A1501) (Pseudomonas stutzeri).